The following is a 203-amino-acid chain: MMSNEKEMTGTTIIAIKYDDGVLIGADSRTSMGAYVSSRVTDKLTQITDKIFVCRSGSSADTQMISSYLRMYLSMYSQLEDSIPQVQRAAALASKIIYENPSLLAGLIVAGYDDKPRVFNISLGGSLTERDWAIGGSGSAFIYGYCDVNWRSGMSLEEGIRFVRNAVSCAINRDNASGGCIRMSAISRTGVQRYFYPGDKVLQ.

Positions 1-10 (MMSNEKEMTG) are cleaved as a propeptide — removed in mature form. T11 functions as the Nucleophile in the catalytic mechanism.

It belongs to the peptidase T1B family. The 26S proteasome consists of a 20S proteasome core and two 19S regulatory subunits. The 20S proteasome core is composed of 28 subunits that are arranged in four stacked rings, resulting in a barrel-shaped structure. The two end rings are each formed by seven alpha subunits, and the two central rings are each formed by seven beta subunits. The catalytic chamber with the active sites is on the inside of the barrel.

The protein localises to the cytoplasm. Its subcellular location is the nucleus. It catalyses the reaction Cleavage of peptide bonds with very broad specificity.. Functionally, the proteasome degrades poly-ubiquitinated proteins in the cytoplasm and in the nucleus. It is essential for the regulated turnover of proteins and for the removal of misfolded proteins. The proteasome is a multicatalytic proteinase complex that is characterized by its ability to cleave peptides with Arg, Phe, Tyr, Leu, and Glu adjacent to the leaving group at neutral or slightly basic pH. It has an ATP-dependent proteolytic activity. In Encephalitozoon cuniculi (strain GB-M1) (Microsporidian parasite), this protein is Probable proteasome subunit beta type-1 (PRE3).